The following is a 516-amino-acid chain: Gastrula zinc finger protein XlCGF53.1 (516 aa).

Disordered regions lie at residues 1–33 (MGMWEEASDTGMKGKKKKKDKNEEEEEERGKKE) and 200–220 (GNQSDCSINPLTEQIQGTDKP). Residues 200-218 (GNQSDCSINPLTEQIQGTD) are compositionally biased toward polar residues. C2H2-type zinc fingers lie at residues 312 to 334 (YICSECQKHFSTKAGLARHQKTH), 354 to 376 (FPCSECGKRFARRQHLTDHQSSH), 382 to 404 (YACSQCEKYFPHRSNLNRHLKLH), 410 to 432 (FPCSQCGKRFPCVSDLNIHRRVH), 438 to 460 (YSCSECGKCFKHHSNLTNHQRTH), 466 to 488 (FSCTECGKGFKDRSSLTVHHRTH), and 494 to 516 (FSCTECGKGFKDRSSLTVHHRTH).

It belongs to the krueppel C2H2-type zinc-finger protein family.

It localises to the nucleus. May be involved in transcriptional regulation. The polypeptide is Gastrula zinc finger protein XlCGF53.1 (Xenopus laevis (African clawed frog)).